We begin with the raw amino-acid sequence, 478 residues long: MTSLPDRGVSSSSSDPLCEGNIAPCSSSSEQKEDCSLKQSKTSILSCVFNSPFNIFEAHQDSSANKSPKSSSGSYDWLRVLRRIVCSGSMWRFLGTSKVLTSSDVWFLGKCYKLSSEESSSDSDSESGHATFLEDFSSRIWITYRRGFDAISDSKYTSDVNWGCMVRSSQMLVAQALIFHHLGRSWRRPSEKPYNPEYIGILHMFGDSEACAFSIHNLLQAGNSYGLAAGSWVGPYAMCRAWQTLVRTNREQHEVVDGNESFPMALYVVSGDEDGERGGAPVVCIDVAAQLCCDFNKGQSTWSPILLLVPLVLGLDKINPRYIPLLKETFTFPQSLGILGGKPGTSTYIAGVQDDRALYLDPHEVQMAVDIAADNIEADTSSYHCSTVRDLALDLIDPSLAIGFYCRDKDDFDDFCSRATELVDKANGAPLFTVVQSVQPSKQMYNQDDVLGISGDGNINVEDLDASGETGEEEWQIL.

Over residues methionine 1 to aspartate 15 the composition is skewed to polar residues. The segment at methionine 1–glycine 20 is disordered. Residue cysteine 164 is the Nucleophile of the active site. Active-site residues include aspartate 361 and histidine 363.

It belongs to the peptidase C54 family. In terms of assembly, interacts with ATG8. In terms of tissue distribution, constitutively expressed.

The protein localises to the cytoplasm. It catalyses the reaction [protein]-C-terminal L-amino acid-glycyl-phosphatidylethanolamide + H2O = [protein]-C-terminal L-amino acid-glycine + a 1,2-diacyl-sn-glycero-3-phosphoethanolamine. Cysteine protease that plays a key role in autophagy by mediating both proteolytic activation and delipidation of ATG8 family proteins. The protease activity is required for proteolytic activation of ATG8 family proteins: cleaves the C-terminal amino acid of ATG8 proteins to reveal a C-terminal glycine. Exposure of the glycine at the C-terminus is essential for ATG8 proteins conjugation to phosphatidylethanolamine (PE) and insertion to membranes, which is necessary for autophagy. In addition to the protease activity, also mediates delipidation of PE-conjugated ATG8 proteins. In Oryza sativa subsp. indica (Rice), this protein is Cysteine protease ATG4B (ATG4B).